The chain runs to 288 residues: Bifunctional protein FolD (288 aa).

Residues Gly-163 to Ser-165, Ser-188, and Ile-229 contribute to the NADP(+) site.

It belongs to the tetrahydrofolate dehydrogenase/cyclohydrolase family. Homodimer.

The enzyme catalyses (6R)-5,10-methylene-5,6,7,8-tetrahydrofolate + NADP(+) = (6R)-5,10-methenyltetrahydrofolate + NADPH. It carries out the reaction (6R)-5,10-methenyltetrahydrofolate + H2O = (6R)-10-formyltetrahydrofolate + H(+). It functions in the pathway one-carbon metabolism; tetrahydrofolate interconversion. Catalyzes the oxidation of 5,10-methylenetetrahydrofolate to 5,10-methenyltetrahydrofolate and then the hydrolysis of 5,10-methenyltetrahydrofolate to 10-formyltetrahydrofolate. The protein is Bifunctional protein FolD of Campylobacter curvus (strain 525.92).